The following is a 284-amino-acid chain: MKQKVVSIGDINVANDLPFVLFGGMNVLESRDLAMRICEHYVTVTQKLGIPYVFKASFDKANRSSIHSYRGPGLEEGMKIFQELKQTFGVKVITDVHEASQAQPVADVVDVIQLPAFLARQTDLVEAMAKTGAVINVKKPQFVSPGQMGNIVDKFHEGGNDKVILCDRGANFGYDNLVVDMLGFSVMKKVSGNSPVIFDVTHALQCRDPFGAASGGRRAQVTELARAGMAVGLAGLFIEAHPDPEHAKCDGPSALPLAKLEPFLKQIKAIDDLVKSFGELDTEH.

It belongs to the KdsA family.

The protein localises to the cytoplasm. The enzyme catalyses D-arabinose 5-phosphate + phosphoenolpyruvate + H2O = 3-deoxy-alpha-D-manno-2-octulosonate-8-phosphate + phosphate. It participates in carbohydrate biosynthesis; 3-deoxy-D-manno-octulosonate biosynthesis; 3-deoxy-D-manno-octulosonate from D-ribulose 5-phosphate: step 2/3. It functions in the pathway bacterial outer membrane biogenesis; lipopolysaccharide biosynthesis. In Citrobacter koseri (strain ATCC BAA-895 / CDC 4225-83 / SGSC4696), this protein is 2-dehydro-3-deoxyphosphooctonate aldolase.